A 283-amino-acid chain; its full sequence is NADPH-dependent 7-cyano-7-deazaguanine reductase (283 aa).

A substrate-binding site is contributed by 90-92 (IES). 92-93 (SK) contributes to the NADPH binding site. Cys191 functions as the Thioimide intermediate in the catalytic mechanism. The active-site Proton donor is the Asp198. Substrate is bound at residue 230 to 231 (HE). 259 to 260 (RG) is an NADPH binding site.

Belongs to the GTP cyclohydrolase I family. QueF type 2 subfamily. In terms of assembly, homodimer.

Its subcellular location is the cytoplasm. The enzyme catalyses 7-aminomethyl-7-carbaguanine + 2 NADP(+) = 7-cyano-7-deazaguanine + 2 NADPH + 3 H(+). The protein operates within tRNA modification; tRNA-queuosine biosynthesis. In terms of biological role, catalyzes the NADPH-dependent reduction of 7-cyano-7-deazaguanine (preQ0) to 7-aminomethyl-7-deazaguanine (preQ1). This Tolumonas auensis (strain DSM 9187 / NBRC 110442 / TA 4) protein is NADPH-dependent 7-cyano-7-deazaguanine reductase.